The primary structure comprises 174 residues: NADH-quinone oxidoreductase subunit C (174 aa).

Belongs to the complex I 30 kDa subunit family. In terms of assembly, NDH-1 is composed of 14 different subunits. Subunits NuoB, C, D, E, F, and G constitute the peripheral sector of the complex.

The protein resides in the cell membrane. It catalyses the reaction a quinone + NADH + 5 H(+)(in) = a quinol + NAD(+) + 4 H(+)(out). NDH-1 shuttles electrons from NADH, via FMN and iron-sulfur (Fe-S) centers, to quinones in the respiratory chain. The immediate electron acceptor for the enzyme in this species is believed to be ubiquinone. Couples the redox reaction to proton translocation (for every two electrons transferred, four hydrogen ions are translocated across the cytoplasmic membrane), and thus conserves the redox energy in a proton gradient. In Roseiflexus sp. (strain RS-1), this protein is NADH-quinone oxidoreductase subunit C.